A 92-amino-acid chain; its full sequence is Protein EMB-1 (92 aa).

Basic and acidic residues-rich tracts occupy residues 1–16 (MASQ…RARQ), 37–61 (AEGR…EMGR), and 72–92 (GGER…RTKK). The interval 1–92 (MASQQEKKEL…IDESKFRTKK (92 aa)) is disordered.

This sequence belongs to the small hydrophilic plant seed protein family. As to expression, expressed in embryogenic cells, somatic embryos and seeds at the later stages of development. In the embryos, expressed in the procambium, the root and shoot meristem and the protoderm of the cotyledons. Not detected in the endosperm or the aleurone layer, in young leaves or roots.

It is found in the nucleus. The polypeptide is Protein EMB-1 (Daucus carota (Wild carrot)).